Reading from the N-terminus, the 104-residue chain is L-rhamnose mutarotase (104 aa).

Tyrosine 18 lines the substrate pocket. Histidine 22 acts as the Proton donor in catalysis. Residues tyrosine 41 and 76–77 (WW) each bind substrate.

Belongs to the rhamnose mutarotase family. In terms of assembly, homodimer.

The protein resides in the cytoplasm. The enzyme catalyses alpha-L-rhamnose = beta-L-rhamnose. Its pathway is carbohydrate metabolism; L-rhamnose metabolism. Involved in the anomeric conversion of L-rhamnose. This Shigella sonnei (strain Ss046) protein is L-rhamnose mutarotase.